Reading from the N-terminus, the 300-residue chain is uncharacterized protein (300 aa).

Solcar repeat units follow at residues 10 to 101, 119 to 199, and 212 to 294; these read ESQT…VKDF, GKAI…AKEY, and FQNF…LIPF. 6 helical membrane-spanning segments follow: residues 16 to 36, 70 to 86, 121 to 141, 178 to 198, 215 to 235, and 275 to 295; these read IVGS…VDTI, ATSL…YKIV, AIMH…LLPL, TAAR…FAKE, FFTS…LDVI, and LTTG…IPFF.

It belongs to the mitochondrial carrier (TC 2.A.29) family.

The protein localises to the mitochondrion inner membrane. This is an uncharacterized protein from Schizosaccharomyces pombe (strain 972 / ATCC 24843) (Fission yeast).